The following is a 454-amino-acid chain: Natural cytotoxicity triggering receptor 3 ligand 1 (454 aa).

The signal sequence occupies residues 1 to 24; it reads MTWRAAASTCAALLILLWALTTEG. Residues 25-262 are Extracellular-facing; sequence DLKVEMMAGG…SETEKTDNFS (238 aa). Positions 27–138 constitute an Ig-like V-type domain; sequence KVEMMAGGTQ…LKAQGTVQLE (112 aa). 2 N-linked (GlcNAc...) asparagine glycosylation sites follow: N43 and N57. A disulfide bridge connects residues C48 and C122. Interaction with NCR3 regions lie at residues 59–62 and 127–130; these read TSMG and TPLK. The 102-residue stretch at 143–244 folds into the Ig-like C1-type domain; the sequence is PASRLLLDQV…LHTPLRSNFT (102 aa). A disulfide bond links C163 and C228. N-linked (GlcNAc...) asparagine glycans are attached at residues N174, N208, N216, N242, and N260. Residues 263–283 form a helical membrane-spanning segment; it reads IHWWPISFIGVGLVLLIVLIP. The Cytoplasmic portion of the chain corresponds to 284 to 454; that stretch reads WKKICNKSSS…QPPTLLLPLQ (171 aa). The retroviral-Gag-like stretch occupies residues 291 to 429; it reads SSSAYTPLKC…APILPVSPIW (139 aa). Positions 395–454 are disordered; the sequence is GKSIDDNSTKSEKQTPREHSDAVPDAPILPVSPIWEPPPATTSTTPVLSSQPPTLLLPLQ. Positions 397 to 416 are enriched in basic and acidic residues; sequence SIDDNSTKSEKQTPREHSDA. Residues 435-454 show a composition bias toward low complexity; the sequence is TTSTTPVLSSQPPTLLLPLQ.

As to quaternary structure, monomer. Interacts specifically with NCR3, but not with other natural killer cell-activating receptors, including NCR1, NCR2 and KLRK1. As to expression, not detected in any normal tissue tested. Expressed at the surface of several tumor cell lines including T and B-lymphomas, myeloid leukemias, melanomas, carcinomas and large T SV40 antigen-transformed cells (at protein level).

It is found in the cell membrane. Its function is as follows. Triggers NCR3-dependent natural killer cell activation. This is Natural cytotoxicity triggering receptor 3 ligand 1 (NCR3LG1) from Homo sapiens (Human).